A 103-amino-acid chain; its full sequence is Histone H4.2 (103 aa).

Gly residues predominate over residues 1–14 (MSGRGKGGKGLGKG). Residues 1–20 (MSGRGKGGKGLGKGGAKRHR) are disordered. Lysine 6 is modified (N6-acetyl-N6-methyllysine; alternate). Residues lysine 6, lysine 9, and lysine 13 each carry the N6-methyllysine; alternate modification. At lysine 13 the chain carries N6-acetyl-N6-methyllysine; alternate. A DNA-binding region spans residues 17–21 (KRHRK). Residue lysine 92 is modified to N6-glutaryllysine.

The protein belongs to the histone H4 family. In terms of assembly, the nucleosome is a histone octamer containing two molecules each of H2A, H2B, H3 and H4 assembled in one H3-H4 heterotetramer and two H2A-H2B heterodimers. The octamer wraps approximately 147 bp of DNA. Glutarylation at Lys-92 (H4K91glu) destabilizes nucleosomes by promoting dissociation of the H2A-H2B dimers from nucleosomes.

It localises to the nucleus. The protein localises to the chromosome. Its function is as follows. Core component of nucleosome. Nucleosomes wrap and compact DNA into chromatin, limiting DNA accessibility to the cellular machineries which require DNA as a template. Histones thereby play a central role in transcription regulation, DNA repair, DNA replication and chromosomal stability. DNA accessibility is regulated via a complex set of post-translational modifications of histones, also called histone code, and nucleosome remodeling. This chain is Histone H4.2 (hhfB), found in Emericella nidulans (strain FGSC A4 / ATCC 38163 / CBS 112.46 / NRRL 194 / M139) (Aspergillus nidulans).